We begin with the raw amino-acid sequence, 26 residues long: Turripeptide OL49 (26 aa).

Post-translationally, contains 3 disulfide bonds. As to expression, expressed by the venom duct.

Its subcellular location is the secreted. In terms of biological role, acts as a neurotoxin by inhibiting an ion channel. This is Turripeptide OL49 from Iotyrris olangoensis (Sea snail).